The primary structure comprises 462 residues: tRNA modification GTPase MnmE (462 aa).

Residues Arg26, Glu91, and Arg130 each coordinate (6S)-5-formyl-5,6,7,8-tetrahydrofolate. The 155-residue stretch at 228 to 382 folds into the TrmE-type G domain; it reads GLSTAKIGRP…IEERINDIFF (155 aa). Asn238 is a K(+) binding site. Residues 238–243, 257–263, and 282–285 each bind GTP; these read NVGKSQ, TDIEGTT, and DTAG. Ser242 contributes to the Mg(2+) binding site. The K(+) site is built by Thr257, Ile259, and Thr262. Thr263 contacts Mg(2+). Position 462 (Lys462) interacts with (6S)-5-formyl-5,6,7,8-tetrahydrofolate.

This sequence belongs to the TRAFAC class TrmE-Era-EngA-EngB-Septin-like GTPase superfamily. TrmE GTPase family. As to quaternary structure, homodimer. Heterotetramer of two MnmE and two MnmG subunits. Requires K(+) as cofactor.

Its subcellular location is the cytoplasm. Functionally, exhibits a very high intrinsic GTPase hydrolysis rate. Involved in the addition of a carboxymethylaminomethyl (cmnm) group at the wobble position (U34) of certain tRNAs, forming tRNA-cmnm(5)s(2)U34. The sequence is that of tRNA modification GTPase MnmE from Streptococcus agalactiae.